The sequence spans 724 residues: Probable metal-nicotianamine transporter YSL8 (724 aa).

The disordered stretch occupies residues 1-58; that stretch reads MRKGGLTPDRDRQIEEHELQETGISPDIERLKRNINATPYQREEEEEDREEQEESVEG. Over residues 8 to 20 the composition is skewed to basic and acidic residues; it reads PDRDRQIEEHELQ. At S25 the chain carries Phosphoserine. Positions 43–56 are enriched in acidic residues; that stretch reads EEEEEDREEQEESV. Helical transmembrane passes span 72–92, 96–116, 144–164, 184–204, 245–265, 304–324, and 349–369; these read LTIR…FIVM, LTTG…FFFV, CVVA…LFAM, LGWM…SVVP, VLGK…FFTA, IINI…WPLI, and VFIA…KVLI. Positions 386–407 are disordered; it reads RSSLAHKEDPPASPASPLTPRI. The next 8 helical transmembrane spans lie at 423-443, 455-475, 478-497, 501-520, 541-561, 603-623, 641-661, and 679-699; these read IPSW…TAIL, IIVI…GAGL, WSLA…AWAG, GGLL…VSTA, FVSQ…VFWL, LMLC…KDCL, FFLG…LFVW, and GLIC…IAGV.

Belongs to the YSL (TC 2.A.67.2) family.

It is found in the membrane. May be involved in the transport of nicotianamine-chelated metals. This Arabidopsis thaliana (Mouse-ear cress) protein is Probable metal-nicotianamine transporter YSL8 (YSL8).